Here is a 15281-residue protein sequence, read N- to C-terminus: Cyclosporin synthetase simA (15281 aa).

Residues 34–463 (SFAQGRLWFL…AVHVKTMPLT (430 aa)) form a condensation 1 region. The adenylation 1 stretch occupies residues 513 to 918 (SYSELDHKSD…NSDQVRDAAV (406 aa)). The 75-residue stretch at 1026-1100 (APRNEIEAVL…DLAATIQRGS (75 aa)) folds into the Carrier 1 domain. The residue at position 1060 (Ser1060) is an O-(pantetheine 4'-phosphoryl)serine. Positions 1118-1549 (SFAQGRLWFL…QTPIMTMPLT (432 aa)) are condensation 2. The tract at residues 1599–2004 (SYAELDQRSD…SSAGVHDAVV (406 aa)) is adenylation 2. The methyltransferase (M) domain 1 stretch occupies residues 2067-2251 (SWTSMYDGTL…LEELEEELLV (185 aa)). The Carrier 2 domain maps to 2524–2598 (APRDSIEAII…DLAATIQQDT (75 aa)). Position 2558 is an O-(pantetheine 4'-phosphoryl)serine (Ser2558). Positions 2616–3044 (SFAQGRLWFL…EPDMPVASMA (429 aa)) are condensation 3. An adenylation 3 region spans residues 3096–3498 (SYADLDRKSD…SHDLVTDAAV (403 aa)). The segment at 3562 to 3749 (SMYDGSLIKK…EDELLVDPAF (188 aa)) is methyltransferase (M) domain 2. The Carrier 3 domain occupies 4011 to 4085 (APRTEIERVL…DLVLIVQQGS (75 aa)). Ser4045 carries the O-(pantetheine 4'-phosphoryl)serine modification. The segment at 4100–4530 (VPQSFAQGRL…GPDVPISTLP (431 aa)) is condensation 4. The interval 4582–4986 (SYAQLDRESD…FLNDGFVEDV (405 aa)) is adenylation 4. The tract at residues 5052 to 5241 (TSMYDGTEID…ELLVDPAFFT (190 aa)) is methyltransferase (M) domain 3. The Carrier 4 domain maps to 5503 to 5577 (PPRNSVEATV…DLAAVIQRNS (75 aa)). The residue at position 5537 (Ser5537) is an O-(pantetheine 4'-phosphoryl)serine. A condensation 5 region spans residues 5592–6023 (VPQSFAQGRL…QPLTPLAVLP (432 aa)). The segment at 6075 to 6478 (TYAQLDQQSD…SHNSVQDAAV (404 aa)) is adenylation 5. The tract at residues 6545 to 6729 (WTSMYDGSEI…ELEANEEELL (185 aa)) is methyltransferase (M) domain 4. In terms of domain architecture, Carrier 5 spans 7000 to 7074 (APRNEIEAIL…DLAASIQRES (75 aa)). At Ser7034 the chain carries O-(pantetheine 4'-phosphoryl)serine. Positions 7092-7517 (SFAQGRLWFL…VLDQPLTPIS (426 aa)) are condensation 6. Residues 7572–7976 (TYAQLDEQSD…DHKSVLAATV (405 aa)) form an adenylation 6 region. One can recognise a Carrier 6 domain in the interval 8060–8134 (PPRDEVEAVL…DLADIIRRGS (75 aa)). The residue at position 8094 (Ser8094) is an O-(pantetheine 4'-phosphoryl)serine. The condensation 7 stretch occupies residues 8152–8582 (SFAQGRLWFL…PKQRLMAMPI (431 aa)). Residues 8633-9038 (TYADLDGQSN…GHDLVHDAAV (406 aa)) are adenylation 7. Residues 9111–9288 (PVNEMKEWLD…EESEEELLVD (178 aa)) are methyltransferase (M) domain 5. Positions 9555–9629 (APRNDTEIVL…DLAASIEQGS (75 aa)) constitute a Carrier 7 domain. The residue at position 9589 (Ser9589) is an O-(pantetheine 4'-phosphoryl)serine. The condensation 8 stretch occupies residues 9647-10077 (SYAQGRLWFL…QVSISTMPLT (431 aa)). The adenylation 8 stretch occupies residues 10127 to 10529 (SYTSLDQKSE…GNKAIHDAAV (403 aa)). The tract at residues 10588 to 10768 (RDFTSWTSMY…DQIRQEVARL (181 aa)) is methyltransferase (M) domain 6. The Carrier 8 domain maps to 11052-11126 (APRNDIEAVL…DLADVVQTGS (75 aa)). O-(pantetheine 4'-phosphoryl)serine is present on Ser11086. The condensation 9 stretch occupies residues 11144-11567 (SFSQGRLWFL…HANLATLPLT (424 aa)). Residues 11616–12019 (TYTELDERSS…RDPAISDSAV (404 aa)) form an adenylation 9 region. The Carrier 9 domain maps to 12124 to 12198 (APRNDIETII…QLAASIQQGS (75 aa)). The residue at position 12158 (Ser12158) is an O-(pantetheine 4'-phosphoryl)serine. The segment at 12216 to 12645 (SFAQGRLWFL…IAISTMPLVD (430 aa)) is condensation 10. Residues 12696–13096 (TYAELDQQSD…SDSSINDAVV (401 aa)) are adenylation 10. The tract at residues 13162–13343 (YDGSLIPREE…EDDEEELLVD (182 aa)) is methyltransferase (M) domain 7. The Carrier 10 domain occupies 13620 to 13694 (APRTEIEVVL…DLAASILQGS (75 aa)). Ser13654 bears the O-(pantetheine 4'-phosphoryl)serine mark. The segment at 13710–14143 (EQSFAQGRLW…PQSPIATMPL (434 aa)) is condensation 11. Residues 14194 to 14598 (TYAELDRLSD…SENSVTDAAV (405 aa)) form an adenylation 11 region. Residues 14695-14769 (APRNETEAAI…SLAGKLEQQQ (75 aa)) enclose the Carrier 11 domain. Ser14729 is subject to O-(pantetheine 4'-phosphoryl)serine. The segment at 14814–15158 (DMYPATQTQI…HPEAEIEGQQ (345 aa)) is condensation 12. A disordered region spans residues 15169-15224 (QARQANGHAPNGTNGTNGTNGTNGANGTNGTNGTNGTHANGINGSNGVNGRDSNVV). Residues 15173-15211 (ANGHAPNGTNGTNGTNGTNGANGTNGTNGTNGTHANGIN) are compositionally biased toward low complexity. Over residues 15213 to 15224 (SNGVNGRDSNVV) the composition is skewed to polar residues.

It belongs to the NRP synthetase family. Requires pantetheine 4'-phosphate as cofactor.

In terms of biological role, nonribosomal peptide synthetase; part of the gene cluster that mediates the biosynthesis of the cycloundecapeptide cyclosporin A (CsA), a compound with antifungal activity used as an immunosuppressant drug. Cyclosporin A contains three non-proteinogenic amino acids: D-alanine, alpha-amino butyric acid and the unusual amino acid (4R)-4-[(E)-2-butenyl]-4-methyl-l-threonine (Bmt). The nonribosomal peptide synthetase (NRPS) catalyzes the elongation and cyclization of the undecapeptide chain. SimA contains 11 modules responsible for sequential uptake of substrates and chain elongation. In addition to the core condensation-adenylation-thiolation (C-A-T) domains present in each module, seven modules contain an additional N-methylation (M) domain (modules 2, 3, 4, 5, 7, 8, and 10). The terminal C domain (C12 or Ct) is implicated in cyclization of the peptidyl chains to form CsA. The first module (A1) takes up D-Ala which is provided by the alanine racemase simB. The A2, A3, A8, and A10 domains have the same substrate-specific signature for recognition of leucine residues. The unusual amino acid (4R)-4-[(E)-2-butenyl]-4-methyl-l-threonine (Bmt) is recognized by the fifth module (A5). The A11 domain recognizes L-Ala. The PKS simG mediates the biosynthesis of 3R-hydroxyl-4R-methyl-6E-octenoic acid from acetyl coenzyme A (acetyl-CoA), malonyl-CoA, and S-adenosylmethionine, and 3R-hydroxyl-4R-methyl-6E-octenoic acid is then be repeatedly oxidized by simI to 3R-hydroxy-4R-methyl-2-keto-6E-octenoic acid. The latter is likely converted to Bmt through the action of the aminotransferase SimJ. This Tolypocladium inflatum (Cyclosporin fungus) protein is Cyclosporin synthetase simA.